We begin with the raw amino-acid sequence, 479 residues long: Aspartyl/glutamyl-tRNA(Asn/Gln) amidotransferase subunit B (479 aa).

Belongs to the GatB/GatE family. GatB subfamily. In terms of assembly, heterotrimer of A, B and C subunits.

The catalysed reaction is L-glutamyl-tRNA(Gln) + L-glutamine + ATP + H2O = L-glutaminyl-tRNA(Gln) + L-glutamate + ADP + phosphate + H(+). It carries out the reaction L-aspartyl-tRNA(Asn) + L-glutamine + ATP + H2O = L-asparaginyl-tRNA(Asn) + L-glutamate + ADP + phosphate + 2 H(+). Its function is as follows. Allows the formation of correctly charged Asn-tRNA(Asn) or Gln-tRNA(Gln) through the transamidation of misacylated Asp-tRNA(Asn) or Glu-tRNA(Gln) in organisms which lack either or both of asparaginyl-tRNA or glutaminyl-tRNA synthetases. The reaction takes place in the presence of glutamine and ATP through an activated phospho-Asp-tRNA(Asn) or phospho-Glu-tRNA(Gln). The polypeptide is Aspartyl/glutamyl-tRNA(Asn/Gln) amidotransferase subunit B (Alcanivorax borkumensis (strain ATCC 700651 / DSM 11573 / NCIMB 13689 / SK2)).